We begin with the raw amino-acid sequence, 219 residues long: Probable nicotinate-nucleotide adenylyltransferase (219 aa).

This sequence belongs to the NadD family.

The catalysed reaction is nicotinate beta-D-ribonucleotide + ATP + H(+) = deamido-NAD(+) + diphosphate. It functions in the pathway cofactor biosynthesis; NAD(+) biosynthesis; deamido-NAD(+) from nicotinate D-ribonucleotide: step 1/1. Functionally, catalyzes the reversible adenylation of nicotinate mononucleotide (NaMN) to nicotinic acid adenine dinucleotide (NaAD). This is Probable nicotinate-nucleotide adenylyltransferase from Hahella chejuensis (strain KCTC 2396).